Consider the following 105-residue polypeptide: Large ribosomal subunit protein uL24 (105 aa).

The protein belongs to the universal ribosomal protein uL24 family. Part of the 50S ribosomal subunit.

Its function is as follows. One of two assembly initiator proteins, it binds directly to the 5'-end of the 23S rRNA, where it nucleates assembly of the 50S subunit. In terms of biological role, one of the proteins that surrounds the polypeptide exit tunnel on the outside of the subunit. This is Large ribosomal subunit protein uL24 from Francisella tularensis subsp. novicida (strain U112).